The primary structure comprises 195 residues: Achaete-scute homolog 1b (195 aa).

The 53-residue stretch at 66 to 118 (MAVARRNERERNRVKQVNMGFQTLRQHVPNGAANKKMSKVETLRSAVEYIRAL) folds into the bHLH domain. A disordered region spans residues 141–164 (VSNAYSAGPESPHSAYSSDEGSYE).

In terms of assembly, efficient DNA binding requires dimerization with another bHLH protein. In the 24 hours embryo, expressed in hindbrain close to the anterior and posterior boundaries of rhombomeres 2-6 and in ventral cells close to the floor plate of most rhombomeres. Also expressed in the telencephalon, diencephalon, tegmentum and spinal cord at sites distinct from those expressing ascl1a. Not expressed in the adenohypophysis.

Its subcellular location is the nucleus. Functionally, transcriptional regulator. May mediate transcription activation by binding to the E box-containing promoter. Involved in neurogenesis. Involved in maintaining rhombomere boundaries in the hindbrain, probably via up-regulation of delta expression. May mediate transcription activation by binding to the E box-containing promoter. The polypeptide is Achaete-scute homolog 1b (Danio rerio (Zebrafish)).